The following is a 459-amino-acid chain: Transmembrane protein 143 (459 aa).

Transmembrane regions (helical) follow at residues 280–300 and 301–321; these read LLNL…GMVV and LTDL…FMGL. Serine 332 carries the phosphoserine modification. Residues 435-459 are disordered; that stretch reads GFPKLDPVAPITSEPPQATPSSNIS. Positions 448–459 are enriched in polar residues; sequence EPPQATPSSNIS.

The protein resides in the membrane. In Homo sapiens (Human), this protein is Transmembrane protein 143 (TMEM143).